Consider the following 180-residue polypeptide: MSGSNMGYYDVLAGLSALEKSSQVVFSATELQQLTQQSHATDKGIEGSENSKAKVSKPKRVAVHGYLGGKVSLADAAQVEYEVGHSLLGSYVPRQQLEALSSVDFSHHFHRTLECKAALETHDVFLAGAGQLSLPFQSHIESPRNSEAKRKRKVIICKRCQSRFIGSHRRSQLREHACVD.

As to quaternary structure, interacts with STH1, RSC3 and ARP9. Component of the two forms of the RSC complex composed of at least either RSC1 or RSC2, and ARP7, ARP9, LDB7, NPL6, RSC3, RSC30, RSC4, RSC58, RSC6, RSC8, RSC9, SFH1, STH1, HTL1 and probably RTT102. The complexes interact with histone and histone variant components of centromeric chromatin. Component of a fungal-specific module (HTL1-LDB7-NPL6-RSC3-RSC30) within the RSC complex.

It localises to the nucleus. Functionally, component of the chromatin structure-remodeling complex (RSC), which is involved in transcription regulation and nucleosome positioning. RSC is responsible for the transfer of a histone octamer from a nucleosome core particle to naked DNA. The reaction requires ATP and involves an activated RSC-nucleosome intermediate. Remodeling reaction also involves DNA translocation, DNA twist and conformational change. As a reconfigurer of centromeric and flanking nucleosomes, RSC complex is required both for proper kinetochore function in chromosome segregation and, via a PKC1-dependent signaling pathway, for organization of the cellular cytoskeleton. Together with HTL1, NPL6, RSC3, RSC30 components, defines a fungal-specific module within the RSC complex that plays a role in many cellular functions including the maintenance of cell wall integrity. May be involved in the transfer of mannosylphosphate (MP) groups into N-linked oligosaccharides. This chain is Chromatin structure-remodeling complex protein RSC14 (LDB7), found in Saccharomyces cerevisiae (strain ATCC 204508 / S288c) (Baker's yeast).